The chain runs to 275 residues: Polyamine aminopropyltransferase (275 aa).

The 234-residue stretch at 2 to 235 folds into the PABS domain; the sequence is DLWLREGQIE…GFWSFTIGSK (234 aa). Glutamine 31 is an S-methyl-5'-thioadenosine binding site. Histidine 62 and aspartate 86 together coordinate spermidine. Residues glutamate 106 and 137–138 each bind S-methyl-5'-thioadenosine; that span reads DG. Residue aspartate 155 is the Proton acceptor of the active site. 155–158 is a binding site for spermidine; the sequence is DSTD.

It belongs to the spermidine/spermine synthase family. As to quaternary structure, homodimer or homotetramer.

It is found in the cytoplasm. It carries out the reaction S-adenosyl 3-(methylsulfanyl)propylamine + putrescine = S-methyl-5'-thioadenosine + spermidine + H(+). It participates in amine and polyamine biosynthesis; spermidine biosynthesis; spermidine from putrescine: step 1/1. Its function is as follows. Catalyzes the irreversible transfer of a propylamine group from the amino donor S-adenosylmethioninamine (decarboxy-AdoMet) to putrescine (1,4-diaminobutane) to yield spermidine. The protein is Polyamine aminopropyltransferase of Clostridium kluyveri (strain NBRC 12016).